The sequence spans 161 residues: Regulator of ribonuclease activity A (161 aa).

This sequence belongs to the RraA family. As to quaternary structure, homotrimer. Binds to both RNA-binding sites in the C-terminal region of Rne and to RhlB.

It localises to the cytoplasm. Globally modulates RNA abundance by binding to RNase E (Rne) and regulating its endonucleolytic activity. Can modulate Rne action in a substrate-dependent manner by altering the composition of the degradosome. Modulates RNA-binding and helicase activities of the degradosome. The sequence is that of Regulator of ribonuclease activity A from Serratia proteamaculans (strain 568).